Here is a 578-residue protein sequence, read N- to C-terminus: MEKQKLIKLIDVAAGRKKADLVLKNAKIVDVFQAKILTGDIAISDGYIAGIGGSYQGVVECNYTGKYVAPGFIEAHIHIESSYVSPEEFSRVFIPRGTTTILADPHEIVNVAGLKGLDYMVNAAKNAKMDIRYMMPPCVPATNFETSGADLYADDMEDALKTGEVDGLAELMNFPGVINADDKMIDEILMAKKYGARIDGHAPQVVGKDLNAYIAAGPANDHECSTLEEAEERLARGMYLLLREGSVTQDLRKLLPIVNTANSRRCLLSGDDVQAKTAINKGHLDNSIRICIDEGLNPITAIQMATLNPAEYCGLNDRGAIAPGRRADMVVFESLEDFAVEETYILGEKLSQGNEYLGEVNYYPIDSVESSMHVKDFTREKLQLHLNSDKVRAIGVVPGEVLTTEEHVTVKRDGDGNFVYNDQEDVTKIVVVERHHNTGNVNVNLLSGYGIKAGAIAISIGHDSHNIIATGTNDDDIFMAVNELIKQEGGAVVVKDEKVISRMELKIAGLMCNLPAEKMIAQQDALDEAVHEELGVPDNVNPVMTLSFMPLAVIPKLKITDKGLVDVEKNAFVSNELD.

This sequence belongs to the metallo-dependent hydrolases superfamily. Adenine deaminase family. Requires Mn(2+) as cofactor.

The enzyme catalyses adenine + H2O + H(+) = hypoxanthine + NH4(+). The protein is Adenine deaminase of Ligilactobacillus salivarius (strain UCC118) (Lactobacillus salivarius).